Here is a 165-residue protein sequence, read N- to C-terminus: Transcription antitermination protein NusB (165 aa).

It belongs to the NusB family.

Functionally, involved in transcription antitermination. Required for transcription of ribosomal RNA (rRNA) genes. Binds specifically to the boxA antiterminator sequence of the ribosomal RNA (rrn) operons. This Chlorobium phaeobacteroides (strain DSM 266 / SMG 266 / 2430) protein is Transcription antitermination protein NusB.